A 525-amino-acid polypeptide reads, in one-letter code: Probable protein kinase UbiB (525 aa).

In terms of domain architecture, Protein kinase spans 119-501 (RFDHHPVASA…QRRTNRLLSA (383 aa)). ATP-binding positions include 125 to 133 (VASASIAQV) and Lys-151. Asp-286 serves as the catalytic Proton acceptor. A helical membrane pass occupies residues 502–522 (ALLFIGGFAVGIIATHVLAWL).

The protein belongs to the ABC1 family. UbiB subfamily.

It localises to the cell inner membrane. The protein operates within cofactor biosynthesis; ubiquinone biosynthesis [regulation]. Its function is as follows. Is probably a protein kinase regulator of UbiI activity which is involved in aerobic coenzyme Q (ubiquinone) biosynthesis. The sequence is that of Probable protein kinase UbiB from Ralstonia nicotianae (strain ATCC BAA-1114 / GMI1000) (Ralstonia solanacearum).